A 218-amino-acid polypeptide reads, in one-letter code: uncharacterized protein (218 aa).

Positions methionine 1–leucine 67 are disordered. Low complexity predominate over residues asparagine 29–serine 39. The segment covering glutamine 40 to serine 49 has biased composition (polar residues). Over residues lysine 58–leucine 67 the composition is skewed to basic residues. 3 CCHC-type zinc fingers span residues lysine 77 to glutamate 94, serine 100 to lysine 117, and alanine 124 to glutamine 141. Residues cysteine 152–glutamine 168 form a CCHC-type 4; atypical zinc finger.

This is an uncharacterized protein from Schizosaccharomyces pombe (strain 972 / ATCC 24843) (Fission yeast).